A 91-amino-acid polypeptide reads, in one-letter code: Small ribosomal subunit protein bS18 (91 aa).

This sequence belongs to the bacterial ribosomal protein bS18 family. Part of the 30S ribosomal subunit. Forms a tight heterodimer with protein bS6.

Functionally, binds as a heterodimer with protein bS6 to the central domain of the 16S rRNA, where it helps stabilize the platform of the 30S subunit. In Wolbachia sp. subsp. Brugia malayi (strain TRS), this protein is Small ribosomal subunit protein bS18.